Consider the following 353-residue polypeptide: Phospho-furanose lactonase (353 aa).

His25, His27, Lys153, His186, and His214 together coordinate Zn(2+). At Lys153 the chain carries N6-carboxylysine. 244-245 (KY) contributes to the substrate binding site. Asp272 lines the Zn(2+) pocket. 275 to 278 (RILY) lines the substrate pocket.

This sequence belongs to the metallo-dependent hydrolases superfamily. Phosphotriesterase family. The cofactor is Zn(2+).

The catalysed reaction is a 1,4-lactone + H2O = a 4-hydroxyacid + H(+). The enzyme catalyses D-xylono-1,4-lactone 5-phosphate + H2O = 5-phospho-D-xylonate + H(+). It catalyses the reaction L-arabino-1,4-lactone 5-phosphate + H2O = 5-phospho-L-arabinonate + H(+). Functionally, catalyzes the hydrolysis of D-xylono-1,4-lactone-5-phosphate and L-arabino-1,4-lactone-5-phosphate. Also able to hydrolyze carboxy 1,4-lactones. In Mycoplasmopsis agalactiae (strain NCTC 10123 / CIP 59.7 / PG2) (Mycoplasma agalactiae), this protein is Phospho-furanose lactonase.